Consider the following 414-residue polypeptide: O-methyltransferase sirM (414 aa).

Aspartate 270 is a binding site for S-adenosyl-L-methionine. The Proton acceptor role is filled by histidine 321.

The protein belongs to the class I-like SAM-binding methyltransferase superfamily. Cation-independent O-methyltransferase family. COMT subfamily.

It participates in mycotoxin biosynthesis. Functionally, O-methyltransferase; part of the gene cluster that mediates the biosynthesis of sirodesmin PL, an epipolythiodioxopiperazine (ETP) characterized by a disulfide bridged cyclic dipeptide and that acts as a phytotoxin which is involved in the blackleg didease of canola. SirD catalyzes the O-prenylation of L-tyrosine (L-Tyr) in the presence of dimethylallyl diphosphate (DMAPP) to yield 4-O-dimethylallyl-L-Tyr, and therefore represents probably the first pathway-specific enzyme in the biosynthesis of sirodesmin PL. 4-O-dimethylallyl-L-Tyr, then undergoes condensation with L-Ser in a reaction catalyzed by the non-ribosomal peptide synthase sirP to form the diketopiperazine (DKP) backbone. Further bishydroxylation of the DKP performed by the cytochrome P450 monooxygenase sirC leads to the production of the intermediate phomamide. This step is essential to form the reactive thiol group required for toxicity of sirodesmin PL. The next steps of sirodesmin biosynthesis are not well understood yet, but some predictions could be made from intermediate compounds identification. Phomamide is converted into phomalizarine via oxidation, probably by sirT. Further oxidation, methylation (by sirM or sirN) and reduction steps convert phomalizarine to deacetyl sirodesmin. Finally, acetyltransferase sirH probably acetylates deacetyl sirodesmin to produce sirodesmin PL. This chain is O-methyltransferase sirM, found in Leptosphaeria maculans (Blackleg fungus).